We begin with the raw amino-acid sequence, 619 residues long: Chaperone protein HscA homolog (619 aa).

It belongs to the heat shock protein 70 family.

Its function is as follows. Chaperone involved in the maturation of iron-sulfur cluster-containing proteins. Has a low intrinsic ATPase activity which is markedly stimulated by HscB. The polypeptide is Chaperone protein HscA homolog (Haemophilus influenzae (strain PittEE)).